A 236-amino-acid polypeptide reads, in one-letter code: Orotidine 5'-phosphate decarboxylase (236 aa).

Residues aspartate 17, lysine 39, 66–75, threonine 125, arginine 186, glutamine 195, glycine 215, and arginine 216 contribute to the substrate site; that span reads DLKFHDIPNT. Residue lysine 68 is the Proton donor of the active site.

The protein belongs to the OMP decarboxylase family. Type 1 subfamily. In terms of assembly, homodimer.

It catalyses the reaction orotidine 5'-phosphate + H(+) = UMP + CO2. It participates in pyrimidine metabolism; UMP biosynthesis via de novo pathway; UMP from orotate: step 2/2. Functionally, catalyzes the decarboxylation of orotidine 5'-monophosphate (OMP) to uridine 5'-monophosphate (UMP). The sequence is that of Orotidine 5'-phosphate decarboxylase from Buchnera aphidicola subsp. Schizaphis graminum (strain Sg).